The sequence spans 626 residues: Putative L-type lectin-domain containing receptor kinase V.8 (626 aa).

The N-terminal stretch at 1–21 (MPSELKVLHIVLVLLYTLSSS) is a signal peptide. The legume-lectin like stretch occupies residues 22 to 212 (TYNSNGNWTL…SIGAFHYMLS (191 aa)). Over 22 to 245 (TYNSNGNWTL…PKKSSDRTKK (224 aa)) the chain is Extracellular. Residues asparagine 28, asparagine 59, asparagine 112, and asparagine 162 are each glycosylated (N-linked (GlcNAc...) asparagine). Residues 246–266 (ILAVCLTLAVFAVFVASGICF) form a helical membrane-spanning segment. Topologically, residues 267 to 626 (VFYTRHKKVK…LTNSFLSHGR (360 aa)) are cytoplasmic. Residues 303–562 (FKEKQLLGKG…GLLCAHHTEL (260 aa)) enclose the Protein kinase domain. ATP-binding positions include 309-317 (LGKGGFGQV) and lysine 332. Residue aspartate 429 is the Proton acceptor of the active site.

This sequence in the C-terminal section; belongs to the protein kinase superfamily. Ser/Thr protein kinase family. It in the N-terminal section; belongs to the leguminous lectin family.

The protein localises to the cell membrane. It catalyses the reaction L-seryl-[protein] + ATP = O-phospho-L-seryl-[protein] + ADP + H(+). It carries out the reaction L-threonyl-[protein] + ATP = O-phospho-L-threonyl-[protein] + ADP + H(+). This chain is Putative L-type lectin-domain containing receptor kinase V.8 (LECRK58), found in Arabidopsis thaliana (Mouse-ear cress).